We begin with the raw amino-acid sequence, 331 residues long: ATP-dependent 6-phosphofructokinase (331 aa).

Residue Gly12 coordinates ATP. ADP is bound by residues 22 to 26 and 55 to 60; these read RGVVR and RYSVSD. ATP is bound by residues 73–74 and 103–106; these read RF and GDGS. Asp104 serves as a coordination point for Mg(2+). Position 127–129 (127–129) interacts with substrate; that stretch reads TID. Residue Asp129 is the Proton acceptor of the active site. Position 156 (Arg156) interacts with ADP. Residues Arg164 and 171–173 each bind substrate; that span reads MGR. ADP is bound by residues 187 to 189, Lys213, and 215 to 217; these read GCE and KKH. Residues Glu224, Arg245, and 251-254 each bind substrate; that span reads HIQR.

Belongs to the phosphofructokinase type A (PFKA) family. ATP-dependent PFK group I subfamily. Prokaryotic clade 'B1' sub-subfamily. As to quaternary structure, homotetramer. Mg(2+) is required as a cofactor.

It localises to the cytoplasm. The catalysed reaction is beta-D-fructose 6-phosphate + ATP = beta-D-fructose 1,6-bisphosphate + ADP + H(+). It functions in the pathway carbohydrate degradation; glycolysis; D-glyceraldehyde 3-phosphate and glycerone phosphate from D-glucose: step 3/4. With respect to regulation, allosterically activated by ADP and other diphosphonucleosides, and allosterically inhibited by phosphoenolpyruvate. Catalyzes the phosphorylation of D-fructose 6-phosphate to fructose 1,6-bisphosphate by ATP, the first committing step of glycolysis. The chain is ATP-dependent 6-phosphofructokinase from Yersinia enterocolitica serotype O:8 / biotype 1B (strain NCTC 13174 / 8081).